A 98-amino-acid polypeptide reads, in one-letter code: Integration host factor subunit alpha (98 aa).

Residues 52–73 form a disordered region; the sequence is FDLRQKSERPGRNPKTGEDIPI. A compositionally biased stretch (basic and acidic residues) spans 54-73; sequence LRQKSERPGRNPKTGEDIPI.

Belongs to the bacterial histone-like protein family. In terms of assembly, heterodimer of an alpha and a beta chain.

Its function is as follows. This protein is one of the two subunits of integration host factor, a specific DNA-binding protein that functions in genetic recombination as well as in transcriptional and translational control. The chain is Integration host factor subunit alpha from Pseudoalteromonas atlantica (strain T6c / ATCC BAA-1087).